A 441-amino-acid chain; its full sequence is tRNA(Ile)-lysidine synthase (441 aa).

28 to 33 lines the ATP pocket; sequence SGGTDS.

This sequence belongs to the tRNA(Ile)-lysidine synthase family.

The protein resides in the cytoplasm. It catalyses the reaction cytidine(34) in tRNA(Ile2) + L-lysine + ATP = lysidine(34) in tRNA(Ile2) + AMP + diphosphate + H(+). In terms of biological role, ligates lysine onto the cytidine present at position 34 of the AUA codon-specific tRNA(Ile) that contains the anticodon CAU, in an ATP-dependent manner. Cytidine is converted to lysidine, thus changing the amino acid specificity of the tRNA from methionine to isoleucine. In Orientia tsutsugamushi (strain Boryong) (Rickettsia tsutsugamushi), this protein is tRNA(Ile)-lysidine synthase.